Consider the following 190-residue polypeptide: Elongation factor P (190 aa).

It belongs to the elongation factor P family.

Its subcellular location is the cytoplasm. It participates in protein biosynthesis; polypeptide chain elongation. Functionally, involved in peptide bond synthesis. Stimulates efficient translation and peptide-bond synthesis on native or reconstituted 70S ribosomes in vitro. Probably functions indirectly by altering the affinity of the ribosome for aminoacyl-tRNA, thus increasing their reactivity as acceptors for peptidyl transferase. The protein is Elongation factor P of Hyphomonas neptunium (strain ATCC 15444).